The following is a 103-amino-acid chain: Seminal ribonuclease (103 aa).

4 disulfide bridges follow: cysteine 12-cysteine 70, cysteine 26-cysteine 81, cysteine 44-cysteine 96, and cysteine 51-cysteine 58. Substrate is bound by residues 27 to 31, lysine 52, and arginine 71; that span reads KLVNT.

The protein belongs to the pancreatic ribonuclease family. Homodimer; disulfide-linked.

The protein resides in the secreted. The catalysed reaction is an [RNA] containing cytidine + H2O = an [RNA]-3'-cytidine-3'-phosphate + a 5'-hydroxy-ribonucleotide-3'-[RNA].. It carries out the reaction an [RNA] containing uridine + H2O = an [RNA]-3'-uridine-3'-phosphate + a 5'-hydroxy-ribonucleotide-3'-[RNA].. Functionally, this enzyme hydrolyzes both single- and double-stranded RNA. The polypeptide is Seminal ribonuclease (SRN) (Cephalophus silvicultor (Yellow-backed duiker)).